The chain runs to 213 residues: Citrate synthase, mitochondrial (213 aa).

Residue H74 is part of the active site. Residues K94 and K100 each carry the N6-acetyllysine; alternate modification. N6-succinyllysine; alternate is present on residues K94 and K100. H120 is an active-site residue. R129 contacts oxaloacetate. Position 148 is an N6-acetyllysine; alternate (K148). K148 is subject to N6-succinyllysine; alternate. N6-acetyllysine is present on K155. Residue K166 is modified to N6-acetyllysine; alternate. Residue K166 is modified to N6-succinyllysine; alternate. K168 carries the N6,N6,N6-trimethyllysine modification. The active site involves D175. Residue R201 participates in oxaloacetate binding.

It belongs to the citrate synthase family. As to quaternary structure, homodimer. In terms of processing, in response to mitochondrial stress, the precursor protein is ubiquitinated by the SIFI complex in the cytoplasm before mitochondrial import, leading to its degradation. Within the SIFI complex, UBR4 initiates ubiquitin chain that are further elongated or branched by KCMF1.

The protein resides in the mitochondrion matrix. The enzyme catalyses oxaloacetate + acetyl-CoA + H2O = citrate + CoA + H(+). It functions in the pathway carbohydrate metabolism; tricarboxylic acid cycle; isocitrate from oxaloacetate: step 1/2. Functionally, key enzyme of the Krebs tricarboxylic acid cycle which catalyzes the synthesis of citrate from acetyl coenzyme A and oxaloacetate. The polypeptide is Citrate synthase, mitochondrial (Mesocricetus auratus (Golden hamster)).